The primary structure comprises 489 residues: Probable cytochrome P450 CYP44 (489 aa).

Residues 12–31 form a disordered region; that stretch reads VEKCPYSPTSSPNTPPRTFS. Over residues 16 to 29 the composition is skewed to low complexity; it reads PYSPTSSPNTPPRT. Residue cysteine 438 participates in heme binding.

Belongs to the cytochrome P450 family. The cofactor is heme.

Its function is as follows. Cytochromes P450 are a group of heme-thiolate monooxygenases. They oxidize a variety of structurally unrelated compounds, including steroids, fatty acids, and xenobiotics. In Caenorhabditis elegans, this protein is Probable cytochrome P450 CYP44 (cyp-44A1).